Here is a 654-residue protein sequence, read N- to C-terminus: Endoplasmic reticulum chaperone BiP (654 aa).

Positions methionine 1–alanine 18 are cleaved as a signal peptide. Residues methionine 1 to alanine 80 form a required for interaction with ELAPOR1 region. Residue glycine 36–tyrosine 39 participates in ATP binding. Phosphoserine is present on serine 86. Lysine 96 is a binding site for ATP. Position 125 is an N6-acetyllysine (lysine 125). Residues lysine 125–lysine 280 are nucleotide-binding (NBD). Tyrosine 160 is modified (3'-nitrotyrosine). An N6-acetyllysine modification is found at lysine 213. Glycine 227–threonine 229 is a binding site for ATP. N6-acetyllysine is present on lysine 271. Glutamate 293 to serine 300 contacts ATP. Lysine 326 carries the post-translational modification N6-acetyllysine. Lysine 352 is covalently cross-linked (Glycyl lysine isopeptide (Lys-Gly) (interchain with G-Cter in SUMO2)). Lysine 353 is subject to N6-acetyllysine; alternate. Lysine 353 participates in a covalent cross-link: Glycyl lysine isopeptide (Lys-Gly) (interchain with G-Cter in SUMO1); alternate. Glycine 364–arginine 367 lines the ATP pocket. The segment at glutamine 409 to valine 419 is interdomain linker. Positions cysteine 420–threonine 500 are substrate-binding (SBD). Lysine 447 bears the N6-succinyllysine mark. The residue at position 492 (arginine 492) is an Omega-N-methylarginine. Threonine 518 bears the O-AMP-threonine; alternate mark. Threonine 518 is modified (phosphothreonine; alternate). Lysine 585 carries the post-translational modification N6,N6,N6-trimethyllysine; by METTL21A; in vitro. Lysine 585 is subject to N6,N6-dimethyllysine; alternate. At lysine 585 the chain carries N6-methyllysine; alternate. The residue at position 591 (lysine 591) is an N6-methyllysine. The segment at isoleucine 631–leucine 654 is disordered. Threonine 643 and threonine 648 each carry phosphothreonine. Acidic residues predominate over residues glycine 644–leucine 654. Serine 649 is modified (phosphoserine). A Prevents secretion from ER motif is present at residues lysine 651–leucine 654.

It belongs to the heat shock protein 70 family. In terms of assembly, monomer and homooligomer; homooligomerization via the interdomain linker inactivates the chaperone activity and acts as a storage of HSPA5/BiP molecules. Interacts with DNAJC1 (via J domain). Component of an EIF2 complex at least composed of CELF1/CUGBP1, CALR, CALR3, EIF2S1, EIF2S2, HSP90B1 and HSPA5. Part of a large chaperone multiprotein complex comprising DNAJB11, HSP90B1, HSPA5, HYOU, PDIA2, PDIA4, PDIA6, PPIB, SDF2L1, UGGT1 and very small amounts of ERP29, but not, or at very low levels, CALR nor CANX. Interacts with TMEM132A and TRIM21. May form a complex with ERLEC1, OS9, SEL1L and SYVN1. Interacts with DNAJC10. Interacts with DNAJB9/ERdj4; leading to recruit HSPA5/BiP to ERN1/IRE1. Interacts with ERN1/IRE1 (via luminal domain); the interaction takes place following interaction with DNAJB9/ERdj4 and leads to inactivate ERN1/IRE1, the interaction also competitively inhibits ERN1 interaction with MANF. Interacts directly with MANF (via SAP domain); the interaction inhibits ATP binding to HSPA5/BiP and subsequent nucleotide exchange. Interacts with EIF2AK3/PERK (via luminal domain); interaction leads to inactivate EIF2AK3/PERK. Interacts with MX1. Interacts with METTL23. Interacts with CEMIP; the interaction induces calcium leakage from the endoplasmic reticulum and cell migration. Interacts with PCSK4 form; the interaction takes place in the endoplasmic reticulum. Interacts with CIPC. Interacts with CCDC88B (via C-terminus); the interaction opposes ERN1-mediated JNK activation, protecting against apoptosis. Interacts with INPP5K; necessary for INPP5K localization at the endoplasmic reticulum. Interacts with MANF; the interaction is direct. Interacts with LOXL2; leading to activate the ERN1/IRE1-XBP1 pathway of the unfolded protein response. Interacts with CLU under stressed condition; interaction increases CLU protein stability; facilitates its retrotranslocation and redistribution to the mitochondria; cooperatively suppress stress-induced apoptosis by stabilizing mitochondrial membrane integrity. Interacts with CCDC47. Interacts with CLN3. Interacts with ELAPOR1; may regulate the function of HSPA5 in apoptosis and cell proliferation. Interacts with CASP7. Interacts with ILDR2; the interaction stabilizes ILDR2 expression. Interacts with ADAM7. In unstressed cells, AMPylation at Thr-518 by FICD inactivates the chaperome activity: AMPylated form is locked in a relatively inert state and only weakly stimulated by J domain-containing proteins. In response to endoplasmic reticulum stress, de-AMPylation by the same protein, FICD, restores the chaperone activity.

The protein localises to the endoplasmic reticulum lumen. It localises to the melanosome. The protein resides in the cytoplasm. Its subcellular location is the cell surface. It carries out the reaction ATP + H2O = ADP + phosphate + H(+). Its activity is regulated as follows. The chaperone activity is regulated by ATP-induced allosteric coupling of the nucleotide-binding (NBD) and substrate-binding (SBD) domains. In the ADP-bound and nucleotide-free (apo) states, the two domains have little interaction. In contrast, in the ATP-bound state the two domains are tightly coupled, which results in drastically accelerated kinetics in both binding and release of polypeptide substrates. J domain-containing co-chaperones (DNAJB9/ERdj4 or DNAJC10/ERdj5) stimulate the ATPase activity and are required for efficient substrate recognition by HSPA5/BiP. Homooligomerization inactivates participating HSPA5/BiP protomers and probably act as reservoirs to store HSPA5/BiP molecules when they are not needed by the cell. Its function is as follows. Endoplasmic reticulum chaperone that plays a key role in protein folding and quality control in the endoplasmic reticulum lumen. Involved in the correct folding of proteins and degradation of misfolded proteins via its interaction with DNAJC10/ERdj5, probably to facilitate the release of DNAJC10/ERdj5 from its substrate. Acts as a key repressor of the EIF2AK3/PERK and ERN1/IRE1-mediated unfolded protein response (UPR). In the unstressed endoplasmic reticulum, recruited by DNAJB9/ERdj4 to the luminal region of ERN1/IRE1, leading to disrupt the dimerization of ERN1/IRE1, thereby inactivating ERN1/IRE1. Also binds and inactivates EIF2AK3/PERK in unstressed cells. Accumulation of misfolded protein in the endoplasmic reticulum causes release of HSPA5/BiP from ERN1/IRE1 and EIF2AK3/PERK, allowing their homodimerization and subsequent activation. Plays an auxiliary role in post-translational transport of small presecretory proteins across endoplasmic reticulum (ER). May function as an allosteric modulator for SEC61 channel-forming translocon complex, likely cooperating with SEC62 to enable the productive insertion of these precursors into SEC61 channel. Appears to specifically regulate translocation of precursors having inhibitory residues in their mature region that weaken channel gating. May also play a role in apoptosis and cell proliferation. This chain is Endoplasmic reticulum chaperone BiP, found in Rattus norvegicus (Rat).